We begin with the raw amino-acid sequence, 447 residues long: ATP-dependent protease ATPase subunit HslU (447 aa).

ATP-binding positions include I18, 60–65 (GVGKTE), D259, E325, and R397.

This sequence belongs to the ClpX chaperone family. HslU subfamily. A double ring-shaped homohexamer of HslV is capped on each side by a ring-shaped HslU homohexamer. The assembly of the HslU/HslV complex is dependent on binding of ATP.

It localises to the cytoplasm. In terms of biological role, ATPase subunit of a proteasome-like degradation complex; this subunit has chaperone activity. The binding of ATP and its subsequent hydrolysis by HslU are essential for unfolding of protein substrates subsequently hydrolyzed by HslV. HslU recognizes the N-terminal part of its protein substrates and unfolds these before they are guided to HslV for hydrolysis. In Burkholderia pseudomallei (strain K96243), this protein is ATP-dependent protease ATPase subunit HslU.